Here is a 35-residue protein sequence, read N- to C-terminus: Conotoxin Cal6.1c (35 aa).

A propeptide spanning residues 1 to 35 (GLNRPSKRCLAGSAPCEFHKRSTCCSGHCIIWWCA) is cleaved from the precursor. Disulfide bonds link Cys-9–Cys-25, Cys-16–Cys-29, and Cys-24–Cys-34.

Belongs to the conotoxin O1 superfamily. Expressed by the venom duct.

Its subcellular location is the secreted. In terms of biological role, probable neurotoxin with unknown target. Possibly targets ion channels. The sequence is that of Conotoxin Cal6.1c from Californiconus californicus (California cone).